Reading from the N-terminus, the 511-residue chain is ESX-1 secretion system protein EccD1 (511 aa).

Ser2 bears the N-acetylserine mark. Residues 2 to 143 are Cytoplasmic-facing; sequence SAPAVAAGPT…PEFDRTALNR (142 aa). A helical transmembrane segment spans residues 144 to 164; it reads FVGAAIPLLTAPVIGMAMRAW. The Periplasmic portion of the chain corresponds to 165–170; it reads WETGRS. Residues 171–191 form a helical membrane-spanning segment; sequence LWWPLAIGILGIAVLVGSFVA. The Cytoplasmic portion of the chain corresponds to 192–202; that stretch reads NRFYQSGHLAE. The helical transmembrane segment at 203-223 threads the bilayer; the sequence is CLLVTTYLLIATAAALAVPLP. Topologically, residues 224–227 are periplasmic; the sequence is RGVN. A helical membrane pass occupies residues 228–248; the sequence is SLGAPQVAGAATAVLFLTLMT. The Cytoplasmic segment spans residues 249–257; sequence RGGPRKRHE. The chain crosses the membrane as a helical span at residues 258–278; sequence LASFAVITAIAVIAAAAAFGY. The Periplasmic segment spans residues 279-285; the sequence is GYQDWVP. The chain crosses the membrane as a helical span at residues 286-306; that stretch reads AGGIAFGLFIVTNAAKLTVAV. Topologically, residues 307–367 are cytoplasmic; sequence ARIALPPIPV…TERSKLAKQL (61 aa). 2 helical membrane passes run 368 to 388 and 389 to 409; these read LIGY…AVVV and RGHF…VCGF. Over 410–420 the chain is Cytoplasmic; it reads RSRLYAERWCA. The chain crosses the membrane as a helical span at residues 421–441; that stretch reads WALLAATVAIPTGLTAKLIIW. At 442-444 the chain is on the periplasmic side; that stretch reads YPH. Residues 445–465 form a helical membrane-spanning segment; the sequence is YAWLLLSVYLTVALVALVVVG. Topologically, residues 466-482 are cytoplasmic; it reads SMAHVRRVSPVVKRTLE. Residues 483-503 form a helical membrane-spanning segment; the sequence is LIDGAMIAAIIPMLLWITGVY. Over 504 to 511 the chain is Periplasmic; sequence DTVRNIRF.

Belongs to the EccD/Snm4 family. In terms of assembly, possibly a homodimer. Part of the ESX-1 / type VII secretion system (T7SS), which is composed of cytosolic and membrane components. The ESX-1 membrane complex is composed of EccB1, EccCa1, EccCb1, EccD1 and EccE1.

Its subcellular location is the cell inner membrane. In terms of biological role, part of the ESX-1 specialized secretion system, which delivers several virulence factors to host cells during infection, including the key virulence factors EsxA (ESAT-6) and EsxB (CFP-10). The sequence is that of ESX-1 secretion system protein EccD1 from Mycobacterium tuberculosis (strain ATCC 25618 / H37Rv).